The following is a 263-amino-acid chain: Proteasome subunit beta type-5 (263 aa).

Positions Met-1–Gly-59 are cleaved as a propeptide — removed in mature form. The active-site Nucleophile is the Thr-60. Position 108 (Ala-108) interacts with bortezomib.

It belongs to the peptidase T1B family. As to quaternary structure, the 26S proteasome consists of a 20S proteasome core and two 19S regulatory subunits. The 20S proteasome core is a barrel-shaped complex made of 28 subunits that are arranged in four stacked rings. The two outer rings are each formed by seven alpha subunits, and the two inner rings are formed by seven beta subunits. The proteolytic activity is exerted by three beta-subunits PSMB5, PSMB6 and PSMB7. Directly interacts with POMP. Interacts with ABCB1 and TAP1.

It is found in the cytoplasm. The protein localises to the nucleus. The catalysed reaction is Cleavage of peptide bonds with very broad specificity.. In terms of biological role, component of the 20S core proteasome complex involved in the proteolytic degradation of most intracellular proteins. This complex plays numerous essential roles within the cell by associating with different regulatory particles. Associated with two 19S regulatory particles, forms the 26S proteasome and thus participates in the ATP-dependent degradation of ubiquitinated proteins. The 26S proteasome plays a key role in the maintenance of protein homeostasis by removing misfolded or damaged proteins that could impair cellular functions, and by removing proteins whose functions are no longer required. Associated with the PA200 or PA28, the 20S proteasome mediates ubiquitin-independent protein degradation. This type of proteolysis is required in several pathways including spermatogenesis (20S-PA200 complex) or generation of a subset of MHC class I-presented antigenic peptides (20S-PA28 complex). Within the 20S core complex, PSMB5 displays a chymotrypsin-like activity. The protein is Proteasome subunit beta type-5 of Bos taurus (Bovine).